The following is an 81-amino-acid chain: Costars family protein ABRACL (81 aa).

This sequence belongs to the costars family.

This Salmo salar (Atlantic salmon) protein is Costars family protein ABRACL.